A 148-amino-acid polypeptide reads, in one-letter code: Deoxyuridine 5'-triphosphate nucleotidohydrolase (148 aa).

Substrate contacts are provided by residues 68 to 70 (RSG), asparagine 81, 85 to 87 (TID), and lysine 95.

It belongs to the dUTPase family. Requires Mg(2+) as cofactor.

It carries out the reaction dUTP + H2O = dUMP + diphosphate + H(+). The protein operates within pyrimidine metabolism; dUMP biosynthesis; dUMP from dCTP (dUTP route): step 2/2. This enzyme is involved in nucleotide metabolism: it produces dUMP, the immediate precursor of thymidine nucleotides and it decreases the intracellular concentration of dUTP so that uracil cannot be incorporated into DNA. The polypeptide is Deoxyuridine 5'-triphosphate nucleotidohydrolase (Rickettsia prowazekii (strain Madrid E)).